Consider the following 85-residue polypeptide: LYR motif-containing protein 5A (85 aa).

The protein belongs to the complex I LYR family.

The chain is LYR motif-containing protein 5A (lyrm5a) from Danio rerio (Zebrafish).